A 152-amino-acid polypeptide reads, in one-letter code: Small ribosomal subunit protein uS13z/uS13y/uS13x (152 aa).

Position 2 is an N-acetylserine (Ser-2).

The protein belongs to the universal ribosomal protein uS13 family.

It is found in the cytoplasm. Its function is as follows. Located at the top of the head of the 40S subunit, it contacts several helices of the 18S rRNA. This Arabidopsis thaliana (Mouse-ear cress) protein is Small ribosomal subunit protein uS13z/uS13y/uS13x (RPS18A).